The following is a 436-amino-acid chain: 3-ketoacyl-CoA thiolase (436 aa).

The Acyl-thioester intermediate role is filled by Cys-99. Catalysis depends on proton acceptor residues His-392 and Cys-422.

Belongs to the thiolase-like superfamily. Thiolase family. As to quaternary structure, heterotetramer of two alpha chains (FadJ) and two beta chains (FadI).

The protein resides in the cytoplasm. The enzyme catalyses an acyl-CoA + acetyl-CoA = a 3-oxoacyl-CoA + CoA. It functions in the pathway lipid metabolism; fatty acid beta-oxidation. Catalyzes the final step of fatty acid oxidation in which acetyl-CoA is released and the CoA ester of a fatty acid two carbons shorter is formed. The protein is 3-ketoacyl-CoA thiolase of Escherichia fergusonii (strain ATCC 35469 / DSM 13698 / CCUG 18766 / IAM 14443 / JCM 21226 / LMG 7866 / NBRC 102419 / NCTC 12128 / CDC 0568-73).